The following is a 305-amino-acid chain: Endonuclease 1 (305 aa).

Residues 1 to 28 form the signal peptide; it reads MASAFRSSTRLILVLGILILCSVSSVRS. Residues Trp29 and His34 each contribute to the a divalent metal cation site. Position 29 to 34 (29 to 34) interacts with substrate; that stretch reads WSKEGH. The cysteines at positions 38 and 69 are disulfide-linked. 2 residues coordinate a divalent metal cation: Asp73 and His88. Residues 73 to 79, 88 to 91, and 98 to 103 each bind substrate; these read DQIRHWY, HYID, and SYEYSR. Disulfide bonds link Cys97–Cys249, Cys105–Cys115, and Cys230–Cys236. Residues Asn122 and Tyr139 each coordinate substrate. An N-linked (GlcNAc...) asparagine glycan is attached at Asn122. An N-linked (GlcNAc...) asparagine glycan is attached at Asn140. A divalent metal cation is bound by residues His150, Asp154, His160, His184, and Asp188. A substrate binding region spans residues 150 to 199; that stretch reads HFMGDIHQPMHVGFTSDEGGNTIDLRWYKHKSNLHHVWDREIILTALKEN. A glycan (N-linked (GlcNAc...) asparagine) is linked at Asn214. Residues 287 to 305 constitute a propeptide, removed in mature form; that stretch reads MILNRVFSDDHAIAGVAAT.

This sequence belongs to the nuclease type I family. In terms of assembly, monomer. Requires Mn(2+) as cofactor. Ca(2+) is required as a cofactor. In terms of tissue distribution, mostly expressed in flowers and during leaf and stem senescence, and, to a lower extent, detectable at low levels in roots, leaves, and stems. Particularly expressed in senescing tissues in a NAC92/ORE1-dependent manner.

It carries out the reaction Endonucleolytic cleavage to 5'-phosphomononucleotide and 5'-phosphooligonucleotide end-products.. Functionally, endonuclease that can use RNA, single-stranded and double-stranded DNA as substrates. Hydrolyzes single-stranded DNA and RNA without apparent specificity for bases during senescence. Endonuclease that recognizes and cleaves all types of mismatches with high efficiency, including heteroduplex double-stranded DNA. Maybe involved in programmed cell death (PCD) and senescence. The sequence is that of Endonuclease 1 from Arabidopsis thaliana (Mouse-ear cress).